We begin with the raw amino-acid sequence, 272 residues long: Imidazole glycerol phosphate synthase subunit HisF (272 aa).

Residues Asp-11 and Asp-130 contribute to the active site.

This sequence belongs to the HisA/HisF family. As to quaternary structure, heterodimer of HisH and HisF.

Its subcellular location is the cytoplasm. The catalysed reaction is 5-[(5-phospho-1-deoxy-D-ribulos-1-ylimino)methylamino]-1-(5-phospho-beta-D-ribosyl)imidazole-4-carboxamide + L-glutamine = D-erythro-1-(imidazol-4-yl)glycerol 3-phosphate + 5-amino-1-(5-phospho-beta-D-ribosyl)imidazole-4-carboxamide + L-glutamate + H(+). It participates in amino-acid biosynthesis; L-histidine biosynthesis; L-histidine from 5-phospho-alpha-D-ribose 1-diphosphate: step 5/9. In terms of biological role, IGPS catalyzes the conversion of PRFAR and glutamine to IGP, AICAR and glutamate. The HisF subunit catalyzes the cyclization activity that produces IGP and AICAR from PRFAR using the ammonia provided by the HisH subunit. The polypeptide is Imidazole glycerol phosphate synthase subunit HisF (Methanococcus maripaludis (strain C6 / ATCC BAA-1332)).